The chain runs to 68 residues: U-reduvitoxin-Pr3a (68 aa).

A signal peptide spans 1–22 (MKAGMKLVLVLVIASIALLALA). 3 disulfide bridges follow: Cys-29–Cys-47, Cys-36–Cys-52, and Cys-46–Cys-59.

The protein belongs to the venom Ptu1-like knottin family. In terms of tissue distribution, expressed by the venom gland.

Its subcellular location is the secreted. Functionally, binds reversibly and blocks P/Q-type voltage-gated calcium channels (Cav). The sequence is that of U-reduvitoxin-Pr3a from Platymeris rhadamanthus (Red spot assassin bug).